The sequence spans 131 residues: Small ribosomal subunit protein bS6 (131 aa).

The tract at residues 94 to 131 (DAVTEESQLAKNADEKRARKATTRRPDSNDDNDNHSDD) is disordered. Residues 117 to 131 (RRPDSNDDNDNHSDD) show a composition bias toward basic and acidic residues.

It belongs to the bacterial ribosomal protein bS6 family.

Functionally, binds together with bS18 to 16S ribosomal RNA. The sequence is that of Small ribosomal subunit protein bS6 from Psychrobacter cryohalolentis (strain ATCC BAA-1226 / DSM 17306 / VKM B-2378 / K5).